A 337-amino-acid polypeptide reads, in one-letter code: Pentalenene synthase (337 aa).

Asp80 and Asp84 together coordinate Mg(2+). The short motif at 80-84 (DDLFD) is the DDXXD motif element. An intrachain disulfide couples Cys128 to Cys136. Positions 219, 223, and 227 each coordinate Mg(2+).

The protein belongs to the terpene synthase family. As to quaternary structure, monomer. The cofactor is Mg(2+).

The catalysed reaction is (2E,6E)-farnesyl diphosphate = pentalenene + diphosphate. Its pathway is sesquiterpene biosynthesis; pentalenene biosynthesis; pentalenene from farnesyl diphosphate: step 1/1. The protein operates within antibiotic biosynthesis; pentalenolactone biosynthesis. Its function is as follows. Catalyzes the cyclization of farnesyl diphosphate (FPP) to the tricyclic sesquiterpene pentalenene, which is the hydrocarbon precursor of the pentalenolactone family of antibiotics produced by a variety of Streptomyces species. The protein is Pentalenene synthase (penA) of Streptomyces exfoliatus (Streptomyces hydrogenans).